We begin with the raw amino-acid sequence, 24 residues long: Cytochrome c3-2 (24 aa).

A disordered region spans residues 1–24 (GNAPAADMVLKAPGDAKMTKTAVP).

Post-translationally, binds 4 heme groups per subunit.

It localises to the periplasm. Its function is as follows. Participates in sulfate respiration coupled with phosphorylation by transferring electrons from the enzyme dehydrogenase to ferredoxin. The sequence is that of Cytochrome c3-2 from Nitratidesulfovibrio vulgaris (Desulfovibrio vulgaris).